Here is a 189-residue protein sequence, read N- to C-terminus: Guanylate kinase (189 aa).

The region spanning 8–186 is the Guanylate kinase-like domain; sequence GKLTVITGPS…AVIELESLMG (179 aa). 15-22 is an ATP binding site; it reads GPSGVGKG.

The protein belongs to the guanylate kinase family.

It localises to the cytoplasm. The catalysed reaction is GMP + ATP = GDP + ADP. Essential for recycling GMP and indirectly, cGMP. The polypeptide is Guanylate kinase (Prochlorococcus marinus (strain MIT 9313)).